Here is a 360-residue protein sequence, read N- to C-terminus: 3-isopropylmalate dehydrogenase (360 aa).

76-89 (GPKWDKLDMAIRPE) provides a ligand contact to NAD(+). Substrate is bound by residues R96, R106, R134, and D224. Positions 224, 248, and 252 each coordinate Mg(2+). 282-294 (GSAPDIAGQNMAN) lines the NAD(+) pocket.

This sequence belongs to the isocitrate and isopropylmalate dehydrogenases family. LeuB type 1 subfamily. Homodimer. Mg(2+) is required as a cofactor. Requires Mn(2+) as cofactor.

Its subcellular location is the cytoplasm. It carries out the reaction (2R,3S)-3-isopropylmalate + NAD(+) = 4-methyl-2-oxopentanoate + CO2 + NADH. It participates in amino-acid biosynthesis; L-leucine biosynthesis; L-leucine from 3-methyl-2-oxobutanoate: step 3/4. Functionally, catalyzes the oxidation of 3-carboxy-2-hydroxy-4-methylpentanoate (3-isopropylmalate) to 3-carboxy-4-methyl-2-oxopentanoate. The product decarboxylates to 4-methyl-2 oxopentanoate. This chain is 3-isopropylmalate dehydrogenase, found in Hahella chejuensis (strain KCTC 2396).